We begin with the raw amino-acid sequence, 571 residues long: Proline--tRNA ligase (571 aa).

It belongs to the class-II aminoacyl-tRNA synthetase family. ProS type 1 subfamily. In terms of assembly, homodimer.

Its subcellular location is the cytoplasm. It catalyses the reaction tRNA(Pro) + L-proline + ATP = L-prolyl-tRNA(Pro) + AMP + diphosphate. Catalyzes the attachment of proline to tRNA(Pro) in a two-step reaction: proline is first activated by ATP to form Pro-AMP and then transferred to the acceptor end of tRNA(Pro). As ProRS can inadvertently accommodate and process non-cognate amino acids such as alanine and cysteine, to avoid such errors it has two additional distinct editing activities against alanine. One activity is designated as 'pretransfer' editing and involves the tRNA(Pro)-independent hydrolysis of activated Ala-AMP. The other activity is designated 'posttransfer' editing and involves deacylation of mischarged Ala-tRNA(Pro). The misacylated Cys-tRNA(Pro) is not edited by ProRS. This chain is Proline--tRNA ligase, found in Vibrio parahaemolyticus serotype O3:K6 (strain RIMD 2210633).